The following is a 506-amino-acid chain: ATP synthase subunit alpha (506 aa).

169–176 (GDRQTGKT) provides a ligand contact to ATP.

It belongs to the ATPase alpha/beta chains family. F-type ATPases have 2 components, CF(1) - the catalytic core - and CF(0) - the membrane proton channel. CF(1) has five subunits: alpha(3), beta(3), gamma(1), delta(1), epsilon(1). CF(0) has three main subunits: a(1), b(2) and c(9-12). The alpha and beta chains form an alternating ring which encloses part of the gamma chain. CF(1) is attached to CF(0) by a central stalk formed by the gamma and epsilon chains, while a peripheral stalk is formed by the delta and b chains.

It localises to the cell membrane. The enzyme catalyses ATP + H2O + 4 H(+)(in) = ADP + phosphate + 5 H(+)(out). Functionally, produces ATP from ADP in the presence of a proton gradient across the membrane. The alpha chain is a regulatory subunit. The protein is ATP synthase subunit alpha of Lawsonia intracellularis (strain PHE/MN1-00).